Here is a 566-residue protein sequence, read N- to C-terminus: E3 ubiquitin-protein ligase Rnf220 (566 aa).

Lys277 participates in a covalent cross-link: Glycyl lysine isopeptide (Lys-Gly) (interchain with G-Cter in SUMO2). Residues 277–300 (KREGDSPTASPHSSATEDLHHSDR) form a disordered region. Positions 291 to 300 (ATEDLHHSDR) are enriched in basic and acidic residues. Ser390 carries the phosphoserine modification. Residues 485-513 (EESAVTTFEALKARVRELERQLSRGDRYK) adopt a coiled-coil conformation. A required for targeting to the cytoplasm region spans residues 514 to 522 (CLICMDSYS). Residues 514–553 (CLICMDSYSMPLTSIQCWHVHCEECWLRTLGAKKLCPQCN) form an RING-type zinc finger.

Interacts with SIN3B. Interacts with CTNNB1 (via Armadillo repeats 2-8). Interacts with USP7 (via MATH domain). Post-translationally, auto-ubiquitinated; leads to proteasomal degradation. In terms of tissue distribution, in the brain, expressed in the hippocampus, telenecephalon and cerebellum. No expression in astro glial cells or in neural progenitor cells.

The protein localises to the cytoplasm. The protein resides in the nucleus. The enzyme catalyses S-ubiquitinyl-[E2 ubiquitin-conjugating enzyme]-L-cysteine + [acceptor protein]-L-lysine = [E2 ubiquitin-conjugating enzyme]-L-cysteine + N(6)-ubiquitinyl-[acceptor protein]-L-lysine.. The protein operates within protein modification; protein ubiquitination. E3 ubiquitin-protein ligase that promotes the ubiquitination and proteasomal degradation of SIN3B. Independently of its E3 ligase activity, acts as a CTNNB1 stabilizer through USP7-mediated deubiquitination of CTNNB1 and promotes Wnt signaling. Plays a critical role in the regulation of nuclear lamina. The sequence is that of E3 ubiquitin-protein ligase Rnf220 (Rnf220) from Mus musculus (Mouse).